Reading from the N-terminus, the 181-residue chain is MESGFKVTLKDAIRTIPDYPKPGVQFRDVTTLMGNAQAFRRAVDELVYPYAGNRIDKVAGIEARGFILGGAIAHQLSAGFVPIRKKGKLPRDTVRIAYSLEYGVDEMEMHRDAIEKGERVVLVDDLIATGGTAEAAAKLLLQMGAEIVAACFIIDLPDLGGRKKLEALGLPVRTLVAFEGD.

It belongs to the purine/pyrimidine phosphoribosyltransferase family. In terms of assembly, homodimer.

It localises to the cytoplasm. The catalysed reaction is AMP + diphosphate = 5-phospho-alpha-D-ribose 1-diphosphate + adenine. The protein operates within purine metabolism; AMP biosynthesis via salvage pathway; AMP from adenine: step 1/1. Its function is as follows. Catalyzes a salvage reaction resulting in the formation of AMP, that is energically less costly than de novo synthesis. The protein is Adenine phosphoribosyltransferase of Brucella abortus (strain S19).